The primary structure comprises 639 residues: 3D-(3,5/4)-trihydroxycyclohexane-1,2-dione hydrolase (639 aa).

Glutamate 62 lines the thiamine diphosphate pocket. The tract at residues 438-518 is thiamine pyrophosphate binding; sequence SLPGDLQRMW…INILLFDNCG (81 aa). Residues aspartate 489 and asparagine 516 each coordinate Mg(2+).

The protein belongs to the TPP enzyme family. The cofactor is Mg(2+). Requires thiamine diphosphate as cofactor.

It carries out the reaction 3D-3,5/4-trihydroxycyclohexane-1,2-dione + H2O = 5-deoxy-D-glucuronate + H(+). Its pathway is polyol metabolism; myo-inositol degradation into acetyl-CoA; acetyl-CoA from myo-inositol: step 3/7. Its function is as follows. Involved in the cleavage of the C1-C2 bond of 3D-(3,5/4)-trihydroxycyclohexane-1,2-dione (THcHDO) to yield 5-deoxy-glucuronate (5DG). This Clostridium perfringens (strain ATCC 13124 / DSM 756 / JCM 1290 / NCIMB 6125 / NCTC 8237 / Type A) protein is 3D-(3,5/4)-trihydroxycyclohexane-1,2-dione hydrolase.